The following is an 86-amino-acid chain: Large ribosomal subunit protein bL27 (86 aa).

Residues 1–31 are disordered; sequence MAHKKAGGSSRNGRDSAGQRRGVKKFGGEPV.

Belongs to the bacterial ribosomal protein bL27 family.

This Desulfotalea psychrophila (strain LSv54 / DSM 12343) protein is Large ribosomal subunit protein bL27.